Here is a 550-residue protein sequence, read N- to C-terminus: MTTKLIKHGSKAREQMLEGIDILADAVKVTLGPKGRNVLIEQSFGAPKITKDGVTVAKSIELKDKIRNAGAQLLKSAATKAAEVAGDGTTTATVLARALAREGNKLVAAGYNPMDLKRGMDLAVNAVVEEIKRSSKKINSQEEIAQVGTISSNGDKEIGEKIAKAMEEVGKEGVITVEEAKNFSFDVEVVKGMMFDRGYLSPYFVTNSEKMVAELENPFILLFEKKLSNLQPMLPILEAVVQSQRPLLIIAEDVEGEALATLVVNRLRGGLKVAAVKAPGFGDRRKAMMEDIAILTKGELITEDLGMKLENVNIKNLGTAKRVTISKENTVIVDGNGDKKNIEDRVLQIKSQIAETTSDYDKEKLQERLAKLSGGVAVLKVGGATEVEVKERKDRVEDALAATRAAVEEGVVAGGGVTLLHASQTLTKLKVENKDQQAGIEIVIEALKDPLKQIVKNAGENGGVVVGKLLEHNDKNYGFNAQDMQYVDMIKAGIIDPAKVVRTALQDAASVASLIITTETLIVDEPSDKEEPMPMRGGMGGMGGMGGMDF.

ATP contacts are provided by residues 30–33 (TLGP), Lys-51, 87–91 (DGTTT), Gly-415, and Asp-496.

This sequence belongs to the chaperonin (HSP60) family. Forms a cylinder of 14 subunits composed of two heptameric rings stacked back-to-back. Interacts with the co-chaperonin GroES.

The protein localises to the cytoplasm. It carries out the reaction ATP + H2O + a folded polypeptide = ADP + phosphate + an unfolded polypeptide.. In terms of biological role, together with its co-chaperonin GroES, plays an essential role in assisting protein folding. The GroEL-GroES system forms a nano-cage that allows encapsulation of the non-native substrate proteins and provides a physical environment optimized to promote and accelerate protein folding. The sequence is that of Chaperonin GroEL from Rickettsia typhi (strain ATCC VR-144 / Wilmington).